The sequence spans 591 residues: PE-PGRS family protein PE_PGRS5 (591 aa).

The PE domain maps to 1 to 93 (MSFVIAQPEM…AGAYASAEAA (93 aa)). A PGRS region spans residues 94-591 (NAGPNMLAAV…GGKGNNGNPG (498 aa)). Gly residues-rich tracts occupy residues 303-324 (GAGG…GNGG), 336-363 (ASGG…GHVS), 371-412 (GAGG…GDGG), 477-491 (SEAG…GGDG), 539-567 (AGTG…GVNG), and 579-591 (GATG…GNPG). Disordered regions lie at residues 303-412 (GAGG…GDGG), 468-491 (GSVN…GGDG), and 539-591 (AGTG…GNPG).

This sequence belongs to the mycobacterial PE family. PGRS subfamily. As to quaternary structure, interacts with human TLR4.

It is found in the host endoplasmic reticulum. In terms of biological role, involved in endoplasmic reticulum (ER) stress-mediated apoptosis through human Toll-like receptor 4 (TLR4) signaling pathway. Localizes to the host ER, leading to ER stress, disruption of intracellular Ca(2+) homeostasis and increase of nitric oxide (NO) and reactive oxygen species (ROS) levels. Stress response results in caspase-8 activation and apoptosis of macrophage cells. Apoptosis may lead to dissemination of the bacteria, thereby spreading the disease. The polypeptide is PE-PGRS family protein PE_PGRS5 (Mycobacterium tuberculosis (strain ATCC 25618 / H37Rv)).